The chain runs to 409 residues: Probable type I inositol 1,4,5-trisphosphate 5-phosphatase (409 aa).

This sequence belongs to the inositol 1,4,5-trisphosphate 5-phosphatase type I family.

It catalyses the reaction 1D-myo-inositol 1,4,5-trisphosphate + H2O = 1D-myo-inositol 1,4-bisphosphate + phosphate. The enzyme catalyses 1D-myo-inositol 1,3,4,5-tetrakisphosphate + H2O = 1D-myo-inositol 1,3,4-trisphosphate + phosphate. The protein is Probable type I inositol 1,4,5-trisphosphate 5-phosphatase (ipp-5) of Caenorhabditis elegans.